A 366-amino-acid chain; its full sequence is tRNA/tmRNA (uracil-C(5))-methyltransferase (366 aa).

S-adenosyl-L-methionine is bound by residues Q190, Y218, N223, E239, and D299. C324 functions as the Nucleophile in the catalytic mechanism. Catalysis depends on E358, which acts as the Proton acceptor.

Belongs to the class I-like SAM-binding methyltransferase superfamily. RNA M5U methyltransferase family. TrmA subfamily.

The catalysed reaction is uridine(54) in tRNA + S-adenosyl-L-methionine = 5-methyluridine(54) in tRNA + S-adenosyl-L-homocysteine + H(+). It catalyses the reaction uridine(341) in tmRNA + S-adenosyl-L-methionine = 5-methyluridine(341) in tmRNA + S-adenosyl-L-homocysteine + H(+). Dual-specificity methyltransferase that catalyzes the formation of 5-methyluridine at position 54 (m5U54) in all tRNAs, and that of position 341 (m5U341) in tmRNA (transfer-mRNA). This chain is tRNA/tmRNA (uracil-C(5))-methyltransferase, found in Salmonella choleraesuis (strain SC-B67).